A 588-amino-acid polypeptide reads, in one-letter code: Adenine deaminase (588 aa).

The protein belongs to the metallo-dependent hydrolases superfamily. Adenine deaminase family. The cofactor is Mn(2+).

It carries out the reaction adenine + H2O + H(+) = hypoxanthine + NH4(+). This Desulforamulus reducens (strain ATCC BAA-1160 / DSM 100696 / MI-1) (Desulfotomaculum reducens) protein is Adenine deaminase.